The chain runs to 342 residues: S-adenosylmethionine:tRNA ribosyltransferase-isomerase (342 aa).

It belongs to the QueA family. As to quaternary structure, monomer.

Its subcellular location is the cytoplasm. It carries out the reaction 7-aminomethyl-7-carbaguanosine(34) in tRNA + S-adenosyl-L-methionine = epoxyqueuosine(34) in tRNA + adenine + L-methionine + 2 H(+). The protein operates within tRNA modification; tRNA-queuosine biosynthesis. Transfers and isomerizes the ribose moiety from AdoMet to the 7-aminomethyl group of 7-deazaguanine (preQ1-tRNA) to give epoxyqueuosine (oQ-tRNA). The protein is S-adenosylmethionine:tRNA ribosyltransferase-isomerase of Listeria monocytogenes serovar 1/2a (strain ATCC BAA-679 / EGD-e).